The following is a 304-amino-acid chain: MTTLRIATRKSPLALWQSEHVAAALRQHHPGLEVVLVPMSTRGDEMLDRSLAAIGGKGLFLKELELAMLRGEADCAVHSLKDVPMELDAPFVLPAILERGDPADALVSNLYASLQALPLGARVGTSSLRRQAQLRAARPDLELIDLRGNVNTRLAKLDNGGYDAIVLACAGLQRLGLEARISARLDAPEWLPAPAQGAVAVECRGDDARIYSLLAVLDAGRTRACVEAERAMNRALHGSCHVPVAAFARWEGQGLFLQGMVGSASDGRLIHADAHGSAEDTEALGRRVAQGLFDKGAAQLLAEL.

An S-(dipyrrolylmethanemethyl)cysteine modification is found at Cys240.

This sequence belongs to the HMBS family. As to quaternary structure, monomer. It depends on dipyrromethane as a cofactor.

It catalyses the reaction 4 porphobilinogen + H2O = hydroxymethylbilane + 4 NH4(+). It participates in porphyrin-containing compound metabolism; protoporphyrin-IX biosynthesis; coproporphyrinogen-III from 5-aminolevulinate: step 2/4. Its function is as follows. Tetrapolymerization of the monopyrrole PBG into the hydroxymethylbilane pre-uroporphyrinogen in several discrete steps. The protein is Porphobilinogen deaminase of Xanthomonas euvesicatoria pv. vesicatoria (strain 85-10) (Xanthomonas campestris pv. vesicatoria).